A 238-amino-acid polypeptide reads, in one-letter code: Aspartate/glutamate leucyltransferase (238 aa).

The protein belongs to the R-transferase family. Bpt subfamily.

It localises to the cytoplasm. It catalyses the reaction N-terminal L-glutamyl-[protein] + L-leucyl-tRNA(Leu) = N-terminal L-leucyl-L-glutamyl-[protein] + tRNA(Leu) + H(+). The enzyme catalyses N-terminal L-aspartyl-[protein] + L-leucyl-tRNA(Leu) = N-terminal L-leucyl-L-aspartyl-[protein] + tRNA(Leu) + H(+). Its function is as follows. Functions in the N-end rule pathway of protein degradation where it conjugates Leu from its aminoacyl-tRNA to the N-termini of proteins containing an N-terminal aspartate or glutamate. The polypeptide is Aspartate/glutamate leucyltransferase (Shewanella sp. (strain MR-4)).